Reading from the N-terminus, the 416-residue chain is Argininosuccinate synthase (416 aa).

Residues 11 to 19 (AYSGGLDTS) and alanine 37 each bind ATP. Residue tyrosine 88 participates in L-citrulline binding. 2 positions are modified to phosphotyrosine: tyrosine 88 and tyrosine 114. 116–124 (AHGATGKGN) contacts ATP. L-aspartate is bound by residues threonine 120, asparagine 124, and aspartate 125. An L-citrulline-binding site is contributed by asparagine 124. Positions 128, 181, 190, 271, and 283 each coordinate L-citrulline. A Phosphoserine modification is found at serine 181.

Belongs to the argininosuccinate synthase family. Homotetramer.

Its subcellular location is the cytoplasm. It is found in the cytosol. The catalysed reaction is L-citrulline + L-aspartate + ATP = 2-(N(omega)-L-arginino)succinate + AMP + diphosphate + H(+). It functions in the pathway amino-acid biosynthesis; L-arginine biosynthesis; L-arginine from L-ornithine and carbamoyl phosphate: step 2/3. The protein operates within nitrogen metabolism; urea cycle; (N(omega)-L-arginino)succinate from L-aspartate and L-citrulline: step 1/1. In terms of biological role, one of the enzymes of the urea cycle, the metabolic pathway transforming neurotoxic amonia produced by protein catabolism into inocuous urea in the liver of ureotelic animals. Catalyzes the formation of arginosuccinate from aspartate, citrulline and ATP and together with ASL it is responsible for the biosynthesis of arginine in most body tissues. The chain is Argininosuccinate synthase from Gallus gallus (Chicken).